Consider the following 296-residue polypeptide: Nucleotide-binding protein SPJ_1472 (296 aa).

13–20 provides a ligand contact to ATP; the sequence is GMSGAGKT. 63–66 contributes to the GTP binding site; it reads DMRS.

It belongs to the RapZ-like family.

Displays ATPase and GTPase activities. The polypeptide is Nucleotide-binding protein SPJ_1472 (Streptococcus pneumoniae (strain JJA)).